The chain runs to 297 residues: Phosphatidylglycerol--prolipoprotein diacylglyceryl transferase (297 aa).

4 helical membrane-spanning segments follow: residues 20 to 40, 57 to 77, 105 to 125, and 133 to 153; these read FITI…GLFV, EILP…YVIF, AVWE…ISII, and INLK…QSIG. Residue Arg154 coordinates a 1,2-diacyl-sn-glycero-3-phospho-(1'-sn-glycerol). The next 3 helical transmembrane spans lie at 193 to 213, 225 to 245, and 266 to 286; these read PTFL…IIIF, GFIS…IEGL, and AQFI…FLRL.

It belongs to the Lgt family.

The protein localises to the cell inner membrane. The enzyme catalyses L-cysteinyl-[prolipoprotein] + a 1,2-diacyl-sn-glycero-3-phospho-(1'-sn-glycerol) = an S-1,2-diacyl-sn-glyceryl-L-cysteinyl-[prolipoprotein] + sn-glycerol 1-phosphate + H(+). It functions in the pathway protein modification; lipoprotein biosynthesis (diacylglyceryl transfer). Catalyzes the transfer of the diacylglyceryl group from phosphatidylglycerol to the sulfhydryl group of the N-terminal cysteine of a prolipoprotein, the first step in the formation of mature lipoproteins. This chain is Phosphatidylglycerol--prolipoprotein diacylglyceryl transferase, found in Prochlorococcus marinus (strain MIT 9215).